Consider the following 341-residue polypeptide: Zinc finger protein ZIC 4 (341 aa).

The disordered stretch occupies residues 36–66 (HHGPQLAASSNPSVLPGLHEQPPQASHSRPL). The C2H2-type 1; atypical zinc-finger motif lies at 135-169 (LICKWLGDDSPMSPRPCSKTFSTMHELVTHVTVEH). The C2H2-type 2; atypical zinc-finger motif lies at 178–205 (HICFWEECPRQGKPFKAKYKLVNHIRVH). 3 consecutive C2H2-type zinc fingers follow at residues 211 to 235 (FPCP…KRTH), 241 to 265 (FRCE…SHVH), and 271 to 295 (YMCK…MKVH). Residues 289-309 (RKHMKVHGRSPPPSSGYDSAI) are disordered.

This sequence belongs to the GLI C2H2-type zinc-finger protein family. In terms of tissue distribution, exclusively expressed in the cerebellum.

The protein localises to the nucleus. Its function is as follows. Binds to DNA. This chain is Zinc finger protein ZIC 4 (Zic4), found in Mus musculus (Mouse).